Reading from the N-terminus, the 596-residue chain is Trehalase (596 aa).

An N-terminal signal peptide occupies residues 1–23; sequence MFKLPTISLLLVSWSCLVALSQA. Substrate-binding positions include arginine 193, 200–201, asparagine 237, and 246–248; these read WD and RSQ. Asparagine 288 and asparagine 293 each carry an N-linked (GlcNAc...) asparagine glycan. Residues 303–323 are disordered; sequence SSGPRPESYREDVETGEEFPT. Residues 307–309 and glycine 341 contribute to the substrate site; that span reads RPE. The active-site Proton donor/acceptor is the aspartate 343. Residues asparagine 359, asparagine 451, and asparagine 516 are each glycosylated (N-linked (GlcNAc...) asparagine). Catalysis depends on glutamate 541, which acts as the Proton donor/acceptor. Glutamate 556 contributes to the substrate binding site.

Belongs to the glycosyl hydrolase 37 family. As to expression, in the adult brain predominantly expressed in glial cells (at protein level).

The catalysed reaction is alpha,alpha-trehalose + H2O = alpha-D-glucose + beta-D-glucose. In terms of biological role, enzyme that cleaves trehalose to produce 2 glucose molecules that can be used by the glycolytic pathway. Glycolysis is essential in glial cells but not in neurons; neurons rely on the citric acid cycle for their energy needs, and on lactate and alanine secreted into the hemolymph by glial cells to fuel it. The protein is Trehalase of Drosophila melanogaster (Fruit fly).